Here is a 626-residue protein sequence, read N- to C-terminus: Zinc finger protein 471 (626 aa).

Residues 14–85 (VTFKDVAIDF…TSEMTRSPFS (72 aa)) form the KRAB domain. 15 consecutive C2H2-type zinc fingers follow at residues 206 to 228 (FKCNECDKTFTHSSSLTVHFRIH), 234 to 256 (YACEECGKAFKQRQHLAQHHRTH), 262 to 284 (FECKECRKAFKQSEHLIQHQRIH), 290 to 312 (YKCKECRKAFRQPAHLAQHQRIH), 318 to 340 (YECKECGKAFSDGSSFARHQRCH), 346 to 369 (YECIECGKAFRYNTSFIRHWRSYH), 375 to 397 (FNCIDCGKAFSVHIGLILHRRIH), 403 to 425 (YKCGVCGKTFSSGSSRTVHQRIH), 431 to 453 (YECDICGKDFSHHASLTQHQRVH), 459 to 481 (YECKECGKAFRQNVHLVSHLRIH), 487 to 509 (YECKECGKAFRISSQLATHQRIH), 515 to 537 (YECIECGNAFKQRSHLAQHQKTH), 543 to 565 (YECNECGKAFSQTSNLTQHQRIH), 571 to 593 (YKCTECGKAFSDSSSCAQHQRLH), and 599 to 621 (YQCFECGKAFRRKLSLICHQRSH).

Belongs to the krueppel C2H2-type zinc-finger protein family.

The protein localises to the nucleus. Its function is as follows. May be involved in transcriptional regulation. The polypeptide is Zinc finger protein 471 (ZNF471) (Homo sapiens (Human)).